Here is a 60-residue protein sequence, read N- to C-terminus: Bowman-Birk type proteinase inhibitor C1 (60 aa).

4 cysteine pairs are disulfide-bonded: cysteine 5/cysteine 21, cysteine 11/cysteine 19, cysteine 28/cysteine 35, and cysteine 32/cysteine 49.

The protein belongs to the Bowman-Birk serine protease inhibitor family. As to expression, expressed in bulb (at protein level).

In terms of biological role, serine protease inhibitor. Strongly inhibits trypsin (Ki = 0.22 nM) and very weakly inhibits chymotrypsin (Ki = 1200 nM). Does not inhibit bacterial subtilisin. This is Bowman-Birk type proteinase inhibitor C1 from Hyacinthus orientalis (Common hyacinth).